The chain runs to 287 residues: Homoserine kinase (287 aa).

78–88 is an ATP binding site; that stretch reads PLSRGLGSSST.

The protein belongs to the GHMP kinase family. Homoserine kinase subfamily.

The protein localises to the cytoplasm. The catalysed reaction is L-homoserine + ATP = O-phospho-L-homoserine + ADP + H(+). It functions in the pathway amino-acid biosynthesis; L-threonine biosynthesis; L-threonine from L-aspartate: step 4/5. Its function is as follows. Catalyzes the ATP-dependent phosphorylation of L-homoserine to L-homoserine phosphate. The polypeptide is Homoserine kinase (Lactobacillus gasseri (strain ATCC 33323 / DSM 20243 / BCRC 14619 / CIP 102991 / JCM 1131 / KCTC 3163 / NCIMB 11718 / NCTC 13722 / AM63)).